Here is a 491-residue protein sequence, read N- to C-terminus: Nucleoside transporter 1.1 (491 aa).

6 helical membrane passes run 27-47 (FYVY…VNAV), 82-102 (YNLI…LSWF), 109-129 (VRLL…MVVP), 136-156 (AGAV…KSIF), 173-193 (STMM…QIIV), and 209-229 (KIYY…LILL). A compositionally biased stretch (basic and acidic residues) spans 260-273 (CHTDEHPTHDKEGR). Disordered stretches follow at residues 260–280 (CHTD…SGKE) and 290–309 (AAAK…PHEV). N274 carries an N-linked (GlcNAc...) asparagine glycan. 5 helical membrane passes run 333-353 (MFVA…GIAV), 361-381 (WFST…RFSP), 395-415 (WIIV…LLHS), 427-447 (VMEV…LVLG), and 460-480 (FVAG…GTVL).

It belongs to the SLC29A/ENT transporter (TC 2.A.57) family.

The protein resides in the membrane. It carries out the reaction adenosine(in) + H(+)(in) = adenosine(out) + H(+)(out). The catalysed reaction is uridine(in) + H(+)(in) = uridine(out) + H(+)(out). Functionally, sodium-independent high affinity nucleoside:H(+) symporter; transports adenosine and uridine. Can transport cytidine and thymidine. The polypeptide is Nucleoside transporter 1.1 (Leishmania donovani).